The primary structure comprises 521 residues: Cytochrome P450 monooxygenase ARMGADRAFT_1018420 (521 aa).

Residues 9 to 26 (VSPIWILTAIVVVAYTTV) traverse the membrane as a helical segment. Heme is bound at residue cysteine 443. Asparagine 450 carries N-linked (GlcNAc...) asparagine glycosylation.

It belongs to the cytochrome P450 family. Requires heme as cofactor.

Its subcellular location is the membrane. The protein operates within secondary metabolite biosynthesis. Functionally, cytochrome P450 monooxygenase, part of the gene cluster that mediates the biosynthesis of melleolides, a range of antifungal and phytotoxic polyketide derivatives composed of an orsellinic acid (OA) moiety esterified to various sesquiterpene alcohols. The first step in melleolides biosynthesis is performed by the delta(6)-protoilludene synthase PRO1 which catalyzes the cyclization of farnesyl diphosphate to protoilludene. The orsellinic acid synthase armB produces OA by condensing acetyl-CoA with 3 malonyl-CoA units in a three-round chain elongation reaction folowed by a C2-C7 ring closure. ArmB further catalyzes the trans-esterification of OA to the various sesquiterpene alcohols resulting from the hydroxylation of protoilludene. The melleolides cluster also includes 5 cytochrome P450 monooxygenases, 4 NAD(+)-dependent oxidoreductases, one flavin-dependent oxidoreductase, and one O-methyltransferase. The cytochrome P450 monooxygenases may be involved in protoilludene hydroxylation to elaborate melleolides with multiple alcohol groups, such as melleolide D, which carries alcohol functionalities at C-4, C-5, C-10, and C-13. The role of the NAD(+)-dependent enzymes remains unknown. Numerous melleolides, including arnamial, show 5'-O-methylation of the aromatic moiety which may be catalyzed by the methyltransferase encoded in the cluster. The flavin-dependent oxidoreductase might represent the dehydrogenase yielding the aldehyde in position 1 of arnamial and other melleolides. Finally, several halogenase localized outside of the cluster, are able to catalyze the transfer of a single chlorine atom to the melleolide backbone, resulting in a 6'-chloromelleolide product. This is Cytochrome P450 monooxygenase ARMGADRAFT_1018420 from Armillaria gallica (Bulbous honey fungus).